The following is a 114-amino-acid chain: MSQKVQNLYEGMYVISATLSDDARHKALDRIQTGITGHGGEIKKLHEQGRRRLAYEIDGHREGYYYLVYFTAPSSAISDLWQEYHLNEDLIRFITLRTDEVMEKIEFKTLDEQQ.

The protein belongs to the bacterial ribosomal protein bS6 family.

Functionally, binds together with bS18 to 16S ribosomal RNA. The polypeptide is Small ribosomal subunit protein bS6 (Protochlamydia amoebophila (strain UWE25)).